The primary structure comprises 413 residues: MAP kinase-interacting serine/threonine-protein kinase 1 (413 aa).

Residues 1 to 26 (MGSSEPLPIVDSDKRRKKKRKTRATD) are disordered. Phosphothreonine; by PAK2 is present on Thr-22. Ser-27 carries the post-translational modification Phosphoserine; by PAK2. The 285-residue stretch at 37–321 (QLTSELLGEG…AAQVLQHPWV (285 aa)) folds into the Protein kinase domain. ATP-binding positions include 43–51 (LGEGAYAKV) and Lys-66. Catalysis depends on Asp-158, which acts as the Proton acceptor. A phosphoserine mark is found at Ser-168 and Ser-173. Phosphothreonine is present on residues Thr-197, Thr-202, and Thr-332.

It belongs to the protein kinase superfamily. CAMK Ser/Thr protein kinase family. In terms of assembly, interacts with the C-terminal regions of EIF4G1 and EIF4G2. Also binds to dephosphorylated ERK1 and ERK2, and to the p38 kinases. Mg(2+) is required as a cofactor. Dual phosphorylation of Thr-197 and Thr-202 activates the kinase. Phosphorylation of Thr-332 activates the kinase. MAPK3/ERK1 is one of the kinases which activate MKNK1/MNK1. Phosphorylation by PAK2 leads to a reduced phosphorylation of EIF4G1.

It carries out the reaction L-seryl-[protein] + ATP = O-phospho-L-seryl-[protein] + ADP + H(+). It catalyses the reaction L-threonyl-[protein] + ATP = O-phospho-L-threonyl-[protein] + ADP + H(+). Its activity is regulated as follows. Phosphorylated and activated by the p38 kinases and kinases in the Erk pathway. In terms of biological role, may play a role in the response to environmental stress and cytokines. Appears to regulate translation by phosphorylating EIF4E, thus increasing the affinity of this protein for the 7-methylguanosine-containing mRNA cap. This is MAP kinase-interacting serine/threonine-protein kinase 1 (Mknk1) from Rattus norvegicus (Rat).